Reading from the N-terminus, the 426-residue chain is Phosphomethylpyrimidine synthase (426 aa).

Residues Asn-65, Met-94, Tyr-123, His-162, 184–186, 225–228, and Glu-264 contribute to the substrate site; these read SRG and DGMR. Position 268 (His-268) interacts with Zn(2+). Tyr-291 provides a ligand contact to substrate. Position 332 (His-332) interacts with Zn(2+). 3 residues coordinate [4Fe-4S] cluster: Cys-408, Cys-411, and Cys-415.

Belongs to the ThiC family. The cofactor is [4Fe-4S] cluster.

It carries out the reaction 5-amino-1-(5-phospho-beta-D-ribosyl)imidazole + S-adenosyl-L-methionine = 4-amino-2-methyl-5-(phosphooxymethyl)pyrimidine + CO + 5'-deoxyadenosine + formate + L-methionine + 3 H(+). The protein operates within cofactor biosynthesis; thiamine diphosphate biosynthesis. In terms of biological role, catalyzes the synthesis of the hydroxymethylpyrimidine phosphate (HMP-P) moiety of thiamine from aminoimidazole ribotide (AIR) in a radical S-adenosyl-L-methionine (SAM)-dependent reaction. This Methanococcus maripaludis (strain C5 / ATCC BAA-1333) protein is Phosphomethylpyrimidine synthase.